A 129-amino-acid chain; its full sequence is Biogenesis of lysosome-related organelles complex 1 subunit CNL1 (129 aa).

This sequence belongs to the BLOC1S4 family. Component of the biogenesis of lysosome-related organelles complex-1 (BLOC-1).

It localises to the cytoplasm. Its function is as follows. Component of the biogenesis of lysosome-related organelles complex-1 (BLOC-1), a complex that is involved in endosomal cargo sorting. This chain is Biogenesis of lysosome-related organelles complex 1 subunit CNL1 (CLN1), found in Eremothecium gossypii (strain ATCC 10895 / CBS 109.51 / FGSC 9923 / NRRL Y-1056) (Yeast).